We begin with the raw amino-acid sequence, 380 residues long: MSKRRMKYHSNNEISYYNFLHSMKDKIVTVYRGGPESKKGKLTAVKSDYIALQAEKKIIYYQLEHVKSITEDTNNSTTTIETEEMLDADDFHSLIGHLINQSVQFNQGGPESKKGRLVWLGDDYAALNTNEDGVVYFNIHHIKSISKHEPDLKIEEQTPVGVLEADDLSEVFKSLTHKWVSINRGGPEAIEGILVDNADGHYTIVKNQEVLRIYPFHIKSISLGPKGSYKKEDQKNEQNQEDNNDKDSNSFISSKSYSSSKSSKRSLKSSDDQSSKSGRSSRSKSSSKSSKRSLKSSDYQSSKSGRSSRSKSSSKSSKRSLKSSDYQSSKSSKRSPRSSDYQSSRSPGYSSSIKSSGKQKEDYSYETIVRTIDYHWKRKF.

The segment at 224-364 (GPKGSYKKED…SSGKQKEDYS (141 aa)) is disordered. Basic and acidic residues predominate over residues 229–248 (YKKEDQKNEQNQEDNNDKDS). Low complexity-rich tracts occupy residues 275–288 (SKSG…SSSK), 296–315 (SSDY…SSSK), and 338–356 (SSDY…IKSS).

This Bacillus subtilis (strain 168) protein is Spore coat protein B (cotB).